We begin with the raw amino-acid sequence, 150 residues long: Glycine/sarcosine/betaine reductase complex component A (150 aa).

The active site involves Sec43. A non-standard amino acid (selenocysteine) is located at residue Sec43.

The protein belongs to the GrdA family. As to quaternary structure, monomer. Component of the glycine, sarcosine and betaine reductase complexes, together with components B and C.

The catalysed reaction is acetyl phosphate + [thioredoxin]-disulfide + NH4(+) + H2O = [thioredoxin]-dithiol + glycine + phosphate + H(+). It catalyses the reaction acetyl phosphate + methylamine + [thioredoxin]-disulfide + H2O = sarcosine + [thioredoxin]-dithiol + phosphate + H(+). The enzyme catalyses acetyl phosphate + trimethylamine + [thioredoxin]-disulfide + H2O = glycine betaine + [thioredoxin]-dithiol + phosphate + H(+). In terms of biological role, in the first step of glycine, betaine and sarcosine reductases, the substrate is bound to component PB via a Schiff base intermediate. Then the PB-activated substrate is nucleophilically attacked by the selenol anion of component PA to transform it to a carboxymethylated selenoether and the respective amine. By action of component PC, acetyl phosphate is formed, leaving component PA in its oxidized state. Finally component PA becomes reduced by the thioredoxin system to start a new catalytic cycle of reductive deamination. In Gottschalkia purinilytica (Clostridium purinilyticum), this protein is Glycine/sarcosine/betaine reductase complex component A (grdA).